A 304-amino-acid polypeptide reads, in one-letter code: ATP synthase gamma chain (304 aa).

This sequence belongs to the ATPase gamma chain family. In terms of assembly, F-type ATPases have 2 components, CF(1) - the catalytic core - and CF(0) - the membrane proton channel. CF(1) has five subunits: alpha(3), beta(3), gamma(1), delta(1), epsilon(1). CF(0) has three main subunits: a, b and c.

Its subcellular location is the cell membrane. Functionally, produces ATP from ADP in the presence of a proton gradient across the membrane. The gamma chain is believed to be important in regulating ATPase activity and the flow of protons through the CF(0) complex. The protein is ATP synthase gamma chain of Mycobacterium marinum (strain ATCC BAA-535 / M).